Here is a 73-residue protein sequence, read N- to C-terminus: Translation initiation factor IF-1 (73 aa).

In terms of domain architecture, S1-like spans 1 to 73 (MAKKDGVIEI…TRGRIVYRYK (73 aa)).

This sequence belongs to the IF-1 family. As to quaternary structure, component of the 30S ribosomal translation pre-initiation complex which assembles on the 30S ribosome in the order IF-2 and IF-3, IF-1 and N-formylmethionyl-tRNA(fMet); mRNA recruitment can occur at any time during PIC assembly.

It is found in the cytoplasm. One of the essential components for the initiation of protein synthesis. Stabilizes the binding of IF-2 and IF-3 on the 30S subunit to which N-formylmethionyl-tRNA(fMet) subsequently binds. Helps modulate mRNA selection, yielding the 30S pre-initiation complex (PIC). Upon addition of the 50S ribosomal subunit IF-1, IF-2 and IF-3 are released leaving the mature 70S translation initiation complex. This is Translation initiation factor IF-1 from Leifsonia xyli subsp. xyli (strain CTCB07).